The chain runs to 94 residues: uncharacterized protein (94 aa).

Belongs to the phD/YefM antitoxin family.

This is an uncharacterized protein from Synechocystis sp. (strain ATCC 27184 / PCC 6803 / Kazusa).